Reading from the N-terminus, the 266-residue chain is Putative carbamate hydrolase RutD (266 aa).

It belongs to the AB hydrolase superfamily. Hydrolase RutD family.

It catalyses the reaction carbamate + 2 H(+) = NH4(+) + CO2. Functionally, involved in pyrimidine catabolism. May facilitate the hydrolysis of carbamate, a reaction that can also occur spontaneously. This Escherichia coli O103:H2 (strain 12009 / EHEC) protein is Putative carbamate hydrolase RutD.